Reading from the N-terminus, the 316-residue chain is Olfactory receptor 2H1 (316 aa).

The Extracellular segment spans residues 1–23 (MVNQSSPMGFLLLGFSEHPALER). Residue Asn-3 is glycosylated (N-linked (GlcNAc...) asparagine). The helical transmembrane segment at 24-47 (TLFVVVFTSYLLTLVGNTLIILLS) threads the bilayer. Residues 48–55 (VLYPRLHS) are Cytoplasmic-facing. Residues 56–77 (PMYFFLSDLSFLDLCFTTSCVP) traverse the membrane as a helical segment. Residues 78–98 (QMLVNLWGPKKTISFLGCSVQ) lie on the Extracellular side of the membrane. A disulfide bridge links Cys-95 with Cys-187. The helical transmembrane segment at 99-118 (LFIFLSLGTTECILLTVMAF) threads the bilayer. Residues 119–137 (DRYVAVCQPLHYATIIHPR) are Cytoplasmic-facing. The chain crosses the membrane as a helical span at residues 138–156 (LCWQLASVAWVMSLVQSIV). The Extracellular portion of the chain corresponds to 157–193 (QTPSTLHLPFCPHQQIDDFLCEVPSLIRLSCGDTSYN). Residues 194–217 (EIQLAVSSVIFVVVPLSLILASYG) traverse the membrane as a helical segment. Residues 218-234 (ATAQAVLRINSATAWRK) lie on the Cytoplasmic side of the membrane. The chain crosses the membrane as a helical span at residues 235-257 (AFGTCSSHLTVVTLFYSSVIAVY). Over 258 to 270 (LQPKNPYAQGRGK) the chain is Extracellular. A helical transmembrane segment spans residues 271 to 290 (FFGLFYAVGTPSLNPLVYTL). Residues 291 to 316 (RNKEIKRALRRLLGKERDSRESWRAA) are Cytoplasmic-facing.

Belongs to the G-protein coupled receptor 1 family.

It is found in the cell membrane. In terms of biological role, odorant receptor. The chain is Olfactory receptor 2H1 (OR2H1) from Homo sapiens (Human).